The primary structure comprises 93 residues: Ferredoxin-2 (93 aa).

Residues 2–91 (YKVTLKTPDG…DVVIETHKED (90 aa)) enclose the 2Fe-2S ferredoxin-type domain. Cysteine 37, cysteine 42, cysteine 45, and cysteine 75 together coordinate [2Fe-2S] cluster.

It belongs to the 2Fe2S plant-type ferredoxin family. The cofactor is [2Fe-2S] cluster.

It is found in the plastid. The protein resides in the chloroplast. In terms of biological role, ferredoxins are iron-sulfur proteins that transfer electrons in a wide variety of metabolic reactions. This chain is Ferredoxin-2, found in Equisetum telmateia (Great horsetail).